Consider the following 31-residue polypeptide: Cyclotide hyen-I (31 aa).

The cyclopeptide (Gly-Asp) cross-link spans 1–31; it reads GSTPCGESCVWIPCISGIVGCSCSNKVCYMD. 3 disulfides stabilise this stretch: cysteine 5–cysteine 21, cysteine 9–cysteine 23, and cysteine 14–cysteine 28.

This is a cyclic peptide. Detected in seeds (at protein level).

Probably participates in a plant defense mechanism. In Pigea enneasperma (Spade flower), this protein is Cyclotide hyen-I.